We begin with the raw amino-acid sequence, 324 residues long: Phospho-N-acetylmuramoyl-pentapeptide-transferase (324 aa).

The next 9 helical transmembrane spans lie at 13 to 33 (VLSA…IFIP), 57 to 77 (GTPT…MLII), 85 to 105 (GMIV…DDIL), 121 to 141 (MILL…NIGT), 143 to 163 (IIIP…PLVV), 179 to 199 (IDGL…IVGF), 201 to 221 (TGHY…LGFL), 238 to 260 (LALG…IIIV), and 303 to 323 (VKLV…GFIA).

The protein belongs to the glycosyltransferase 4 family. MraY subfamily. Mg(2+) serves as cofactor.

It is found in the cell membrane. The catalysed reaction is UDP-N-acetyl-alpha-D-muramoyl-L-alanyl-gamma-D-glutamyl-meso-2,6-diaminopimeloyl-D-alanyl-D-alanine + di-trans,octa-cis-undecaprenyl phosphate = di-trans,octa-cis-undecaprenyl diphospho-N-acetyl-alpha-D-muramoyl-L-alanyl-D-glutamyl-meso-2,6-diaminopimeloyl-D-alanyl-D-alanine + UMP. It functions in the pathway cell wall biogenesis; peptidoglycan biosynthesis. In terms of biological role, catalyzes the initial step of the lipid cycle reactions in the biosynthesis of the cell wall peptidoglycan: transfers peptidoglycan precursor phospho-MurNAc-pentapeptide from UDP-MurNAc-pentapeptide onto the lipid carrier undecaprenyl phosphate, yielding undecaprenyl-pyrophosphoryl-MurNAc-pentapeptide, known as lipid I. The chain is Phospho-N-acetylmuramoyl-pentapeptide-transferase from Clostridium botulinum (strain Eklund 17B / Type B).